The chain runs to 367 residues: Membrane-bound lytic murein transglycosylase C (367 aa).

A signal peptide spans 1–19; it reads MRKYAKYLPFCLVVPFLAA. The N-palmitoyl cysteine moiety is linked to residue Cys20. Cys20 carries S-diacylglycerol cysteine lipidation.

Belongs to the transglycosylase Slt family.

The protein resides in the cell outer membrane. The catalysed reaction is Exolytic cleavage of the (1-&gt;4)-beta-glycosidic linkage between N-acetylmuramic acid (MurNAc) and N-acetylglucosamine (GlcNAc) residues in peptidoglycan, from either the reducing or the non-reducing ends of the peptidoglycan chains, with concomitant formation of a 1,6-anhydrobond in the MurNAc residue.. Functionally, murein-degrading enzyme. May play a role in recycling of muropeptides during cell elongation and/or cell division. The chain is Membrane-bound lytic murein transglycosylase C from Haemophilus ducreyi (strain 35000HP / ATCC 700724).